The primary structure comprises 161 residues: PHD finger-containing protein 4 (161 aa).

The PHD-type zinc finger occupies K30–N80. Zn(2+)-binding residues include C33, C36, C48, C51, H57, C60, C74, and C77. Over residues T114 to P132 the composition is skewed to polar residues. A disordered region spans residues T114–I161. Over residues S146–I161 the composition is skewed to low complexity.

As to quaternary structure, interacts directly with AIPP3/BDT1.

Functionally, together with AIPP3/BDT1, cooperates to form a BAH-PHD bivalent histone reader complex able to read histone H3 lysine 27 trimethylation (H3K27me3) histone marks in order to regulate transcription, especially to prevent early flowering; promotes AIPP3/BDT1 binding to H3K27me3. The chain is PHD finger-containing protein 4 from Arabidopsis thaliana (Mouse-ear cress).